A 311-amino-acid polypeptide reads, in one-letter code: Thymidylate synthase (311 aa).

DUMP-binding positions include Arg-28 and 172 to 173 (RR). Residue Cys-192 is the Nucleophile of the active site. Residues 213–216 (RSCD), Asn-224, and 254–256 (HLY) each bind dUMP. Asp-216 serves as a coordination point for (6R)-5,10-methylene-5,6,7,8-tetrahydrofolate. Ala-310 lines the (6R)-5,10-methylene-5,6,7,8-tetrahydrofolate pocket.

This sequence belongs to the thymidylate synthase family. Bacterial-type ThyA subfamily. In terms of assembly, homodimer.

It is found in the cytoplasm. The catalysed reaction is dUMP + (6R)-5,10-methylene-5,6,7,8-tetrahydrofolate = 7,8-dihydrofolate + dTMP. Its pathway is pyrimidine metabolism; dTTP biosynthesis. In terms of biological role, catalyzes the reductive methylation of 2'-deoxyuridine-5'-monophosphate (dUMP) to 2'-deoxythymidine-5'-monophosphate (dTMP) while utilizing 5,10-methylenetetrahydrofolate (mTHF) as the methyl donor and reductant in the reaction, yielding dihydrofolate (DHF) as a by-product. This enzymatic reaction provides an intracellular de novo source of dTMP, an essential precursor for DNA biosynthesis. This chain is Thymidylate synthase, found in Sphingopyxis alaskensis (strain DSM 13593 / LMG 18877 / RB2256) (Sphingomonas alaskensis).